The sequence spans 640 residues: 5-aminolevulinate synthase, non-specific, mitochondrial (640 aa).

The transit peptide at 1–56 (METVVRSCPFLSRVPQAFLQKAGKSLLFYAQNCPKMMEVGAKPAPRALSTAAVHYQ) directs the protein to the mitochondrion. Disordered stretches follow at residues 60–103 (ETPP…TSQG) and 143–163 (EVAE…GGDP). Polar residues predominate over residues 75-92 (VQQTPDGSQQSPDGTQLP). Residues Arg217, Ser334, and Lys353 each coordinate substrate. Residues Ser386, His414, and Thr442 each coordinate pyridoxal 5'-phosphate. The active site involves Lys445. Position 445 is an N6-(pyridoxal phosphate)lysine (Lys445). Thr474 and Thr475 together coordinate pyridoxal 5'-phosphate. Thr562 contacts substrate. Pro576 carries the post-translational modification Hydroxyproline.

This sequence belongs to the class-II pyridoxal-phosphate-dependent aminotransferase family. In terms of assembly, homodimer. Interacts (hydroxylated form) with VHL. It depends on pyridoxal 5'-phosphate as a cofactor. Post-translationally, in normoxia, is hydroxylated at Pro-576, promoting interaction with VHL, initiating ubiquitination and subsequent degradation via the proteasome. Ubiquitinated; in normoxia following hydroxylation and interaction with VHL, leading to its subsequent degradation via the proteasome.

Its subcellular location is the mitochondrion inner membrane. The enzyme catalyses succinyl-CoA + glycine + H(+) = 5-aminolevulinate + CO2 + CoA. It participates in porphyrin-containing compound metabolism; protoporphyrin-IX biosynthesis; 5-aminolevulinate from glycine: step 1/1. Its function is as follows. Catalyzes the pyridoxal 5'-phosphate (PLP)-dependent condensation of succinyl-CoA and glycine to form aminolevulinic acid (ALA), with CoA and CO2 as by-products. This is 5-aminolevulinate synthase, non-specific, mitochondrial (ALAS1) from Pongo abelii (Sumatran orangutan).